Consider the following 206-residue polypeptide: MSSIEPKVMMVGANKKQRTVQASSRKGCMRGKGGPDNASCTYKGVRQRTWGKWVAEIREPNRGARLWLGTFDTSREAALAYDSAARKLYGPEAHLNLPESLRSYPKTASSPASQTTPSSNTGGKSSSDSESPCSSNEMSSCGRVTEEISWEHINVDLPVMDDSSIWEEATMSLGFPWVHEGDNDISRFDTCISGGYSNWDSFHSPL.

Positions 13–40 are disordered; that stretch reads ANKKQRTVQASSRKGCMRGKGGPDNASC. The segment at residues 41–98 is a DNA-binding region (AP2/ERF); that stretch reads TYKGVRQRTWGKWVAEIREPNRGARLWLGTFDTSREAALAYDSAARKLYGPEAHLNLP. The interval 102–139 is disordered; sequence RSYPKTASSPASQTTPSSNTGGKSSSDSESPCSSNEMS. Low complexity predominate over residues 107–139; the sequence is TASSPASQTTPSSNTGGKSSSDSESPCSSNEMS.

The protein belongs to the AP2/ERF transcription factor family. ERF subfamily.

It is found in the nucleus. Putative transcriptional activator that binds specifically to the DNA sequence 5'-[AG]CCGAC-3'. Binding to the C-repeat/DRE element mediates high salinity-inducible transcription. This Arabidopsis thaliana (Mouse-ear cress) protein is Dehydration-responsive element-binding protein 2D (DREB2D).